A 420-amino-acid chain; its full sequence is Cytochrome P-450 monooxygenase DoxA (420 aa).

Cysteine 367 serves as a coordination point for heme.

This sequence belongs to the cytochrome P450 family. As to quaternary structure, monomer. Heme serves as cofactor.

It is found in the cytoplasm. The enzyme catalyses 13-deoxydaunorubicin + NADPH + O2 + H(+) = 13-dihydrodaunorubicin + NADP(+) + H2O. The catalysed reaction is 13-dihydrodaunorubicin + NADPH + O2 + H(+) = daunorubicin + NADP(+) + 2 H2O. It catalyses the reaction 13-deoxycarminomycin + NADPH + O2 + H(+) = 13-dihydrocarminomycin + NADP(+) + H2O. It carries out the reaction 13-dihydrocarminomycin + NADPH + O2 + H(+) = carminomycin + NADP(+) + 2 H2O. The enzyme catalyses daunorubicin + NADPH + O2 + H(+) = doxorubicin + NADP(+) + H2O. The protein operates within antibiotic biosynthesis; daunorubicin biosynthesis. It participates in antibiotic biosynthesis; carminomycin biosynthesis. Its pathway is antibiotic biosynthesis; doxorubicin biosynthesis. Its function is as follows. Involved in the biosynthesis of the anthracyclines carminomycin, daunorubicin (daunomycin) and doxorubicin (adriamycin) which are aromatic polyketide antibiotics that exhibit high cytotoxicity and are widely applied in the chemotherapy of a variety of cancers. In vivo, DoxA catalyzes the C-13 hydroxylation of 13-deoxycarminomycin and 13-deoxydaunorubicin to yield 13-dihydrocarminomycin and 13-dihydrodaunorubicin, respectively, as well as the oxidation of these 13-dihydro-anthracyclines to their respective 13-keto forms, carminomycin and daunorubicin. In vivo, it also catalyzes the C-14 hydroxylation of daunorubicin to form doxorubicin. It can only use NADP. DoxA acts jointly with DnrV. In Streptomyces peucetius subsp. caesius, this protein is Cytochrome P-450 monooxygenase DoxA (doxA).